The following is a 750-amino-acid chain: Ribosomal RNA large subunit methyltransferase K/L (750 aa).

Residues 46 to 157 (TAYRLCLWSR…RGEAILSLDL (112 aa)) form the THUMP domain.

This sequence belongs to the methyltransferase superfamily. RlmKL family.

It localises to the cytoplasm. The enzyme catalyses guanosine(2445) in 23S rRNA + S-adenosyl-L-methionine = N(2)-methylguanosine(2445) in 23S rRNA + S-adenosyl-L-homocysteine + H(+). It catalyses the reaction guanosine(2069) in 23S rRNA + S-adenosyl-L-methionine = N(2)-methylguanosine(2069) in 23S rRNA + S-adenosyl-L-homocysteine + H(+). Its function is as follows. Specifically methylates the guanine in position 2445 (m2G2445) and the guanine in position 2069 (m7G2069) of 23S rRNA. This is Ribosomal RNA large subunit methyltransferase K/L from Pseudomonas savastanoi pv. phaseolicola (strain 1448A / Race 6) (Pseudomonas syringae pv. phaseolicola (strain 1448A / Race 6)).